Here is a 158-residue protein sequence, read N- to C-terminus: Ribosomal RNA large subunit methyltransferase H (158 aa).

S-adenosyl-L-methionine-binding positions include Leu76, Gly107, and Leu126–Met131.

It belongs to the RNA methyltransferase RlmH family. Homodimer.

It is found in the cytoplasm. It carries out the reaction pseudouridine(1915) in 23S rRNA + S-adenosyl-L-methionine = N(3)-methylpseudouridine(1915) in 23S rRNA + S-adenosyl-L-homocysteine + H(+). Its function is as follows. Specifically methylates the pseudouridine at position 1915 (m3Psi1915) in 23S rRNA. The protein is Ribosomal RNA large subunit methyltransferase H of Teredinibacter turnerae (strain ATCC 39867 / T7901).